Consider the following 253-residue polypeptide: FAS1 domain-containing protein CAGL0M08734g (253 aa).

Positions 1–16 are cleaved as a signal peptide; the sequence is MVALKYVLVPVALVAA. Residues 84–248 enclose the FAS1 domain; sequence DIYLDSQISV…GVILVIDATL (165 aa).

The protein resides in the vacuole. This chain is FAS1 domain-containing protein CAGL0M08734g, found in Candida glabrata (strain ATCC 2001 / BCRC 20586 / JCM 3761 / NBRC 0622 / NRRL Y-65 / CBS 138) (Yeast).